Reading from the N-terminus, the 359-residue chain is Insulin gene enhancer protein ISL-2 (359 aa).

LIM zinc-binding domains follow at residues 25 to 86 and 87 to 149; these read AMCV…RLFG and IKCA…LLER. The tract at residues 151–191 is disordered; it reads AAGSPRSPGPLPGARGLHLPDAGSGRQPALRPHVHKQTEKT. Residues Ser154 and Ser157 each carry the phosphoserine modification. The homeobox DNA-binding region spans 191 to 250; that stretch reads TTRVRTVLNEKQLHTLRTCYAANPRPDALMKEQLVEMTGLSPRVIRVWFQNKRCKDKKKS. The interval 272–301 is LIM-binding domain (LID); it reads GTPLVAGSPIRHENAVQGSAVEVQTYQPPW. The residue at position 279 (Ser279) is a Phosphoserine. Positions 326-336 are enriched in low complexity; the sequence is ESGSLGNSSGS. Residues 326–359 are disordered; the sequence is ESGSLGNSSGSDVTSLSSQLPDTPNSMVPSPVET. Residues 337–359 show a composition bias toward polar residues; it reads DVTSLSSQLPDTPNSMVPSPVET.

Interacts with LHX4.

It localises to the nucleus. Transcriptional factor that defines subclasses of motoneurons that segregate into columns in the spinal cord and select distinct axon pathways. This chain is Insulin gene enhancer protein ISL-2 (ISL2), found in Homo sapiens (Human).